An 827-amino-acid polypeptide reads, in one-letter code: Cadherin-17 (827 aa).

The first 21 residues, 1 to 21, serve as a signal peptide directing secretion; sequence MVSAQLHFLCLLTLYLTGAYG. Residues 22 to 786 lie on the Extracellular side of the membrane; sequence QEGKFSGPLK…NQVGIPTVGM (765 aa). Cadherin domains follow at residues 29-127, 128-243, 244-339, 340-448, 449-565, 566-666, and 667-776; these read PLKP…TFLQ, TKYE…APEP, VEIR…PPTC, LSQV…IPIF, ERSD…VPVF, PQQI…PPRL, and AKDY…RPAG. Asn-148, Asn-183, Asn-249, Asn-418, Asn-545, Asn-573, and Asn-721 each carry an N-linked (GlcNAc...) asparagine glycan. Residues 787–807 traverse the membrane as a helical segment; sequence AVGILLTTFLVIGIILAVVFI. The Cytoplasmic portion of the chain corresponds to 808-827; it reads RMRKDKVEDPQSPENKPLRS.

As to expression, liver and intestine.

The protein resides in the cell membrane. Functionally, cadherins are calcium-dependent cell adhesion proteins. They preferentially interact with themselves in a homophilic manner in connecting cells; cadherins may thus contribute to the sorting of heterogeneous cell types. LI-cadherin may have a role in the morphological organization of liver and intestine. This is Cadherin-17 (Cdh17) from Rattus norvegicus (Rat).